Here is a 471-residue protein sequence, read N- to C-terminus: uncharacterized protein (471 aa).

12 helical membrane passes run 48-68 (FISA…FTIV), 85-105 (LSGV…YPML), 123-140 (YTMS…YALA), 145-165 (SVAL…MFLY), 186-206 (VVNS…GGLM), 223-243 (SGNW…FACF), 277-297 (FVGC…YFLL), 320-340 (GNFL…FSYL), 349-369 (IILL…TIHY), 379-399 (FIIY…SVSL), 414-434 (VAVQ…GGAF), and 440-460 (VVFF…LLII).

Belongs to the major facilitator superfamily.

It localises to the golgi apparatus. The protein resides in the membrane. This is an uncharacterized protein from Schizosaccharomyces pombe (strain 972 / ATCC 24843) (Fission yeast).